Reading from the N-terminus, the 408-residue chain is MSLEDTLANMSLYDAKKYFRKAQNVVFNYTEMEGKVREATNNEPWGASSTLMDQISQGTYNFREREEILSMIFRRFTEKAGSEWRQIYKALQLLDYLIKHGSERFIDDTRNSINLIRILETFHYIDSQGRDQGINVRTRVKALIELLSDDNKIRAERKKARETAKKYKGVAGGSASADGSLNSKAGFTSTKVHGISVSADFDSDNEDNEDGSFSQNGYNDNASRATSTPGQGKQEPEDFVDFFSSESSKPSKELIQEDEKKADEEEDDDDEFSEFQSAVPVTNPANSFNLLNTSPIEGMPATTSSMPFYNSSTTDQGKITPAIAEPKKVDPFSSLFSTAKASAEAPSAPKASQAKAAASNPVSNSTTALSTDQDDDDEFGEMHGGAVQQEQNTNNNHTSSKEIDLLSF.

Ser-2 carries the N-acetylserine modification. An ENTH domain is found at 24–157 (NVVFNYTEME…SDDNKIRAER (134 aa)). The interval 162–182 (ETAKKYKGVAGGSASADGSLN) is disordered. Residues Ser-196, Ser-198, Ser-203, Ser-212, and Ser-223 each carry the phosphoserine modification. Disordered stretches follow at residues 199 to 322 (ADFD…ITPA) and 338 to 408 (TAKA…LLSF). A compositionally biased stretch (acidic residues) spans 201–210 (FDSDNEDNED). Residues 211–231 (GSFSQNGYNDNASRATSTPGQ) are compositionally biased toward polar residues. The span at 249-263 (KPSKELIQEDEKKAD) shows a compositional bias: basic and acidic residues. Acidic residues predominate over residues 264 to 273 (EEEDDDDEFS). The segment covering 279-317 (VPVTNPANSFNLLNTSPIEGMPATTSSMPFYNSSTTDQG) has biased composition (polar residues). Over residues 338-361 (TAKASAEAPSAPKASQAKAAASNP) the composition is skewed to low complexity. Composition is skewed to polar residues over residues 362–371 (VSNSTTALST) and 388–398 (QQEQNTNNNHT). Residues 399-408 (SSKEIDLLSF) are compositionally biased toward basic and acidic residues.

Interacts with the clathrin adapter GGA2, and VPS27.

The protein localises to the cytoplasm. It is found in the golgi apparatus. It localises to the trans-Golgi network membrane. The protein resides in the cytoplasmic vesicle. Its subcellular location is the clathrin-coated vesicle membrane. In terms of biological role, involved in the recruitment of clathrin to the Golgi network and endosomes to form clathrin coated vesicles. Plays a role in the trafficking of clathrin between the Golgi network and endosomes. Binds to membranes enriched in phosphatidylinositol-3,5-bisphosphate (PtdIns(3,5)P2) and, in association with VPS27, is involved in protein sorting at the multivesicular body (MVB). The protein is Epsin-3 (ENT3) of Saccharomyces cerevisiae (strain ATCC 204508 / S288c) (Baker's yeast).